Consider the following 445-residue polypeptide: Putative H/ACA ribonucleoprotein complex subunit 4 (445 aa).

Residues 1 to 32 (MGKKDKRSKLEGDDLAEAQQKGSFQLPSSNET) are disordered. Positions 20 to 32 (QKGSFQLPSSNET) are enriched in polar residues. D113 acts as the Nucleophile in catalysis. A PUA domain is found at 284 to 359 (HKRVVVKDSC…VVAKSKRVIM (76 aa)). A disordered region spans residues 386–445 (LDKFGKPNDTTPKSWAKEYVQTSTKKEVKKEETPDEEEEEAPKKKSKKSKKQESSDSDSD).

Belongs to the pseudouridine synthase TruB family. Component of the small nucleolar ribonucleoprotein particle containing H/ACA-type snoRNAs (H/ACA snoRNPs).

The protein resides in the nucleus. The protein localises to the nucleolus. It catalyses the reaction a uridine in RNA = a pseudouridine in RNA. Plays a central role in ribosomal RNA processing. Probable catalytic subunit of H/ACA small nucleolar ribonucleoprotein (H/ACA snoRNP) complex, which catalyzes pseudouridylation of rRNA. This involves the isomerization of uridine such that the ribose is subsequently attached to C5, instead of the normal N1. Pseudouridine ('psi') residues may serve to stabilize the conformation of rRNAs. The chain is Putative H/ACA ribonucleoprotein complex subunit 4 from Caenorhabditis elegans.